The sequence spans 1838 residues: Lysine-specific demethylase 5 (1838 aa).

Residues 1-150 (MSAKTEADNT…SSNKFDQGKN (150 aa)) form a disordered region. The span at 15 to 31 (SGGGGVGSGTSSGGGAS) shows a compositional bias: gly residues. Positions 45-56 (RNSTGNGTNSGS) are enriched in low complexity. Residues 136–145 (HTQPHSSNKF) are compositionally biased toward polar residues. Residues 161–202 (CPVFRPTTEEFKNPLAYISKIRSIAEKCGIAKILPPATWSPP) form the JmjN domain. An ARID domain is found at 226–316 (TRVKLNFLDQ…ILHPFEVYTS (91 aa)). The span at 321–333 (GPTPTSSGSGSTP) shows a compositional bias: low complexity. 2 disordered regions span residues 321 to 380 (GPTP…GLSG) and 416 to 437 (GSPLATGTTANTRGASQKKGGE). Phosphothreonine is present on threonine 323. Polar residues-rich tracts occupy residues 351-361 (TRQQIAPPNET), 369-380 (FGNSNASCGLSG), and 416-430 (GSPLATGTTANTRGA). The PHD-type 1 zinc-finger motif lies at 448 to 498 (KYICHICNRGDVEESMLLCDGCDDSYHTFCLLPPLTSIPKGEWLCPRCVVE). One can recognise a JmjC domain in the interval 591–757 (EYAESSWNLN…MGRECVNHYS (167 aa)). Fe cation contacts are provided by histidine 637, aspartate 640, and histidine 725. Residues 960 to 1049 (VRTRSDHNQE…LRIELQQLDL (90 aa)) adopt a coiled-coil conformation. The segment at 1293–1354 (DMFCLCKSEF…KWLCPSCVRS (62 aa)) adopts a PHD-type 2 zinc-finger fold. The segment at 1401–1462 (SSPDVSAAQE…SDADDDDDED (62 aa)) is disordered. Positions 1407 to 1417 (AAQEAIMAQQQ) are enriched in low complexity. Phosphoserine occurs at positions 1422 and 1433. Residues 1453–1462 (SDADDDDDED) show a composition bias toward acidic residues. Serine 1474 carries the phosphoserine modification. The segment at 1548-1751 (YMQRQRQQHT…QRSQQAAQED (204 aa)) is disordered. Composition is skewed to low complexity over residues 1576–1595 (NSPNSNSNSGGATGSASNSG), 1624–1650 (GKKGSAAAARKSDAKASPAASTTPGAD), 1658–1667 (ANGGNTNSST), 1674–1683 (SATTTPTPGS), and 1692–1736 (STTA…ATGG). A phosphoserine mark is found at serine 1635 and serine 1640. Residues 1753–1808 (EEECRAENCHKPTGREVDWVQCDGGCNEWFHMYCVGLNRSQIKPDDDYICIRCTKT) form a PHD-type 3 zinc finger. The segment at 1814–1838 (QGSGHSMSVASTTTPGKQRAVQSAR) is disordered.

It belongs to the JARID1 histone demethylase family. In terms of assembly, interacts with Myc. Part of a complex containing Lid, Myc and Ash2. The cofactor is Fe(2+).

It is found in the nucleus. The enzyme catalyses N(6),N(6),N(6)-trimethyl-L-lysyl(4)-[histone H3] + 3 2-oxoglutarate + 3 O2 = L-lysyl(4)-[histone H3] + 3 formaldehyde + 3 succinate + 3 CO2. With respect to regulation, inhibited by Myc. Functionally, histone demethylase that specifically demethylates 'Lys-4' of histone H3, thereby playing a central role in histone code. Does not demethylate histone H3 'Lys-9', H3 'Lys-27', H3 'Lys-36', H3 'Lys-79' or H4 'Lys-20'. Specifically demethylates trimethylated H3 'Lys-4'. Required for the correct regulation of homeotic genes during development. Plays a role in the regulation of the circadian rhythm and in maintaining the normal periodicity of the circadian clock. Regulates the expression of clock-controlled genes including tim, per and cry. This is Lysine-specific demethylase 5 from Drosophila melanogaster (Fruit fly).